An 89-amino-acid chain; its full sequence is Small ribosomal subunit protein uS19 (89 aa).

It belongs to the universal ribosomal protein uS19 family.

Protein S19 forms a complex with S13 that binds strongly to the 16S ribosomal RNA. In Vesicomyosocius okutanii subsp. Calyptogena okutanii (strain HA), this protein is Small ribosomal subunit protein uS19.